The chain runs to 328 residues: Protein-glutamine deamidase Cif (328 aa).

The interval 1 to 68 is disordered; that stretch reads MLEHGVMKIP…TNRTGENPMI (68 aa). A compositionally biased stretch (polar residues) spans 52-63; it reads RSSSISNTNRTG. Active-site residues include Cys-156, His-211, and Gln-231.

This sequence belongs to the Cif family.

The protein resides in the secreted. It localises to the host nucleus. It catalyses the reaction L-glutaminyl-[protein] + H2O = L-glutamyl-[protein] + NH4(+). Protein-glutamine deamidase effector that inhibits the host cell cycle and other key cellular processes such as the actin network and programmed-cell death. Acts by mediating the side chain deamidation of 'Gln-40' of host NEDD8, converting it to glutamate, thereby abolishing the activity of cullin-RING-based E3 ubiquitin-protein ligase complexes (CRL complexes). Inactivation of CRL complexes prevents ubiquitination and subsequent degradation of the cyclin-dependent kinase inhibitors CDKN1A/p21 and CDKN1B/p27, leading to G1 and G2 cell cycle arrests in host cells. Deamidation of 'Gln-40' of host NEDD8 also triggers macrophage-specific programmed cell death. Also able to catalyze deamidation of 'Gln-40' of host ubiquitin in vitro; however, NEDD8 constitutes the preferred substrate in vivo. Also regulates the host NF-kappa-B signaling via activation of MAPK/ERK cascade: activation of host MAPK/ERK cascade is independent of CRL complexes inhibition, suggesting that Cif has other host protein targets than NEDD8. This chain is Protein-glutamine deamidase Cif, found in Burkholderia pseudomallei (strain K96243).